Here is a 216-residue protein sequence, read N- to C-terminus: Transmembrane emp24 domain-containing protein eca (216 aa).

The N-terminal stretch at 1–20 (MRDQFISLALMLCILHSACG) is a signal peptide. The Lumenal segment spans residues 21–182 (LYFHISETER…FRHTSESTNS (162 aa)). The 97-residue stretch at 30–126 (RKCFIEEVPD…QLRVHLDIQV (97 aa)) folds into the GOLD domain. The stretch at 134 to 164 (ANVAQKEKLTELQLRIRQLLDQVEQITKEQN) forms a coiled coil. A helical membrane pass occupies residues 183-203 (RVLWWSLAQTVVLVCMGFWQM). Residues 204–216 (RHLKSFFEAKKLV) are Cytoplasmic-facing. Residues 213–216 (KKLV) carry the Prevents secretion from ER motif.

The protein belongs to the EMP24/GP25L family.

Its subcellular location is the endoplasmic reticulum membrane. Functionally, eca and bai are essential, though not redundant, for dorsoventral patterning of the embryo. Specifically required during early embryogenesis for the activity of maternal tkv, while the zygotic tkv is not affected. Involved in Golgi organization. This Drosophila erecta (Fruit fly) protein is Transmembrane emp24 domain-containing protein eca.